Here is a 786-residue protein sequence, read N- to C-terminus: m7GpppN-mRNA hydrolase dcap-2 (786 aa).

Residues 25–61 (QKQNKSTEEPPSSVQKLLASLQQAQNKSDLSEQPSTS) show a composition bias toward polar residues. A disordered region spans residues 25-148 (QKQNKSTEEP…QQQQQYKGPR (124 aa)). A compositionally biased stretch (basic residues) spans 62–72 (KPKKNEKRKKA). Composition is skewed to polar residues over residues 101–111 (MQQQAENARIS) and 118–133 (QVST…TAPE). Over residues 134-144 (QQNYQQQQQQY) the composition is skewed to low complexity. Residues 238-366 (STVPTYGAIL…LPAYLQGNKF (129 aa)) enclose the Nudix hydrolase domain. The Nudix box motif lies at 273 to 294 (GKINQAEPPRDAAIRETFEETG). Glu-288 and Glu-292 together coordinate Mg(2+). 2 disordered regions span residues 556–576 (IMHS…TPTA) and 623–655 (ISST…SSQV). Composition is skewed to polar residues over residues 623 to 632 (ISSTQKQSIP) and 646 to 655 (SASLSGSSQV).

This sequence belongs to the Nudix hydrolase family. DCP2 subfamily. As to quaternary structure, may be a component of the decapping complex composed of dcap-1 and dcap-2. The cofactor is Mg(2+). Mn(2+) is required as a cofactor. In terms of tissue distribution, expressed in sensory neurons.

It is found in the cytoplasmic granule. It localises to the cytoplasm. Its subcellular location is the perinuclear region. The enzyme catalyses a 5'-end (N(7)-methyl 5'-triphosphoguanosine)-ribonucleoside in mRNA + H2O = N(7)-methyl-GDP + a 5'-end phospho-ribonucleoside in mRNA + 2 H(+). It carries out the reaction a 5'-end (N(2),N(2),N(7)-trimethyl 5'-triphosphoguanosine)-ribonucleoside in mRNA + H2O = N(2),N(2),N(7)-trimethyl-GDP + a 5'-end phospho-ribonucleoside in mRNA + 2 H(+). Inhibited by capped and uncapped RNA. Not inhibited by dinucleotide cap or methylated nucleotide analogs. Functionally, decapping metalloenzyme that catalyzes the cleavage of the cap structure on mRNAs. Removes the 7-methyl guanine cap structure from mRNA molecules, yielding a 5'-phosphorylated mRNA fragment and 7m-GDP. RNA-decapping enzyme although it does not bind the RNA cap. May contribute to gene regulation in multiple RNA pathways including monomethylguanosine- and trimethylguanosine-capped RNAs. In oocytes, may play a role in the response to stress induced by heat shock, osmotic stress and anoxia. Required for the developmental axon guidance and regrowth of PLM touch receptor neurons. Early in embryogenesis, plays a role in ciliary shape formation in sensory neurons. Promotes survival at high temperatures. The sequence is that of m7GpppN-mRNA hydrolase dcap-2 from Caenorhabditis elegans.